The chain runs to 645 residues: Exoribonuclease 2 (645 aa).

An RNB domain is found at 191 to 517 (REDLTELNFI…MNHRLLKALI (327 aa)). An S1 motif domain is found at 563-645 (HIRYSAEIID…DNRSIIAKIV (83 aa)).

Belongs to the RNR ribonuclease family. RNase II subfamily.

It is found in the cytoplasm. The catalysed reaction is Exonucleolytic cleavage in the 3'- to 5'-direction to yield nucleoside 5'-phosphates.. Involved in mRNA degradation. Hydrolyzes single-stranded polyribonucleotides processively in the 3' to 5' direction. The chain is Exoribonuclease 2 from Baumannia cicadellinicola subsp. Homalodisca coagulata.